The following is a 473-amino-acid chain: Putative malate dehydrogenase 1B (473 aa).

It belongs to the LDH/MDH superfamily. MDH type 2 family.

The protein is Putative malate dehydrogenase 1B (MDH1B) of Bos taurus (Bovine).